The sequence spans 1413 residues: Leucine-rich repeat receptor protein kinase MSL1 (1413 aa).

Positions 1 to 23 (MAPMLSIASRSPSPALIAPHASA) are cleaved as a signal peptide. 2 N-linked (GlcNAc...) asparagine glycosylation sites follow: Asn-153 and Asn-192. 29 LRR repeats span residues 185–209 (FQSLVRLNVSGCGFSGELPEAMVNL), 210–233 (QHLQHLDLSDNQLGGPLPASLFDL), 235–257 (MLKVMVLDNNMFSGQLSPAIAHL), 258–281 (QQLTVLSISTNSFSGGLPPELGSL), 282–304 (KNLEYLDIHTNAFSGSIPASFSN), 306–329 (SRLLYLDANNNNLTGSIFPGIRAL), 330–353 (VNLVKLDLSSNGLVGAIPKELCQL), 354–377 (KNLQSLILSDNELTGSIPEEIGNL), 379–401 (QLEVLNLLKCNLMDTVPLSIGNL), 402–425 (EILEGLYISFNSFSGELPASVGEL), 427–449 (NLRQLMAKSAGFTGSIPKELGNC), 450–473 (KKLTTLVLSGNNFTGTIPEELADL), 475–497 (AVVLFDVEGNRLSGHIPDWIQNW), 498–518 (SNVSSISLAQNMFDGPLPGLP), 519–542 (LHLVSFSAESNRLSGSIPAKICQG), 543–565 (TFLQILRLNDNNLTGSIDETFKG), 567–589 (KNLTELSLLDNHLHGEIPEYLAL), 590–613 (LPLVSLDLSHNNFTGMIPDRLWES), 615–636 (TILDISLSDNQLTGMITESIGK), 637–661 (LLSLQSLSIDRNYLQGPLPRSIGAL), 662–685 (RNLTALSLSGNMLSEDIPIQLFNC), 687–709 (NLVTLDLSCNNLTGHIPKAISHL), 710–733 (TKLNTLVLSRNRLSGAIPSELCVA), 745–769 (VQHIGLIDLSRNRLTGHIPRAINNC), 771–793 (ILVELHLQDNLLSGTIPVELAEL), 794–817 (RNITTIDLSSNALVGPVLPWPVPL), 818–841 (ASLQGLLLSNNRLSGSIPSGIGNI), 843–866 (PQITMLDLSGNALTGTLPLDLLCK), and 868–890 (SLNHLDVSDNNISGQIPFSCHED). N-linked (GlcNAc...) asparagine glycosylation is found at Asn-304 and Asn-317. Asn-461, Asn-496, and Asn-499 each carry an N-linked (GlcNAc...) asparagine glycan. 3 N-linked (GlcNAc...) asparagine glycosylation sites follow: Asn-554, Asn-568, and Asn-601. N-linked (GlcNAc...) asparagine glycans are attached at residues Asn-663 and Asn-697. Asn-768 carries an N-linked (GlcNAc...) asparagine glycan. The N-linked (GlcNAc...) asparagine glycan is linked to Asn-795. 4 N-linked (GlcNAc...) asparagine glycosylation sites follow: Asn-878, Asn-901, Asn-917, and Asn-928. LRR repeat units follow at residues 918 to 942 (FTKLTYLDLHNNSLTGRLPSAIARV) and 944 to 966 (SLYYLDLSSNDFSGTIPCGICGM). Asn-973 carries N-linked (GlcNAc...) asparagine glycosylation. Residues 1016 to 1036 (TICCIATAIVIVLVVILVVYL) form a helical membrane-spanning segment. The region spanning 1107-1401 (FDGMHVVGDG…IEAMEYGPLV (295 aa)) is the Protein kinase domain. ATP is bound by residues 1113–1121 (VGDGGFGTV) and Lys-1135. The active-site Proton acceptor is the Asp-1234.

This sequence belongs to the protein kinase superfamily. Ser/Thr protein kinase family. In terms of tissue distribution, expressed in roots, leaves, shoots and spikelets.

It is found in the cell membrane. It carries out the reaction L-seryl-[protein] + ATP = O-phospho-L-seryl-[protein] + ADP + H(+). The catalysed reaction is L-threonyl-[protein] + ATP = O-phospho-L-threonyl-[protein] + ADP + H(+). Receptor-like kinase that may play a role male and female sporogenesis. This chain is Leucine-rich repeat receptor protein kinase MSL1, found in Oryza sativa subsp. japonica (Rice).